Reading from the N-terminus, the 1207-residue chain is DNA-directed RNA polymerase subunit beta' (1207 aa).

Zn(2+) is bound by residues Cys-60, Cys-62, Cys-75, and Cys-78. 3 residues coordinate Mg(2+): Asp-450, Asp-452, and Asp-454. Residues Cys-818, Cys-892, Cys-899, and Cys-902 each coordinate Zn(2+).

Belongs to the RNA polymerase beta' chain family. In terms of assembly, the RNAP catalytic core consists of 2 alpha, 1 beta, 1 beta' and 1 omega subunit. When a sigma factor is associated with the core the holoenzyme is formed, which can initiate transcription. Mg(2+) is required as a cofactor. The cofactor is Zn(2+).

It carries out the reaction RNA(n) + a ribonucleoside 5'-triphosphate = RNA(n+1) + diphosphate. Functionally, DNA-dependent RNA polymerase catalyzes the transcription of DNA into RNA using the four ribonucleoside triphosphates as substrates. This Lactococcus lactis subsp. cremoris (strain MG1363) protein is DNA-directed RNA polymerase subunit beta'.